Here is a 249-residue protein sequence, read N- to C-terminus: Proteasome activator complex subunit 1 (249 aa).

The tract at residues 60–101 (PLDIPVPDPVKEKEKGERKKQQEKEDKDEKKKGEDEDKGPPC) is disordered. Residues 68–98 (PVKEKEKGERKKQQEKEDKDEKKKGEDEDKG) are compositionally biased toward basic and acidic residues.

This sequence belongs to the PA28 family. In terms of assembly, heterodimer of PSME1 and PSME2, which forms a hexameric ring. PSME1 can form homoheptamers.

Implicated in immunoproteasome assembly and required for efficient antigen processing. The PA28 activator complex enhances the generation of class I binding peptides by altering the cleavage pattern of the proteasome. The polypeptide is Proteasome activator complex subunit 1 (PSME1) (Macaca fascicularis (Crab-eating macaque)).